The following is a 150-amino-acid chain: Large ribosomal subunit protein bL9 (150 aa).

It belongs to the bacterial ribosomal protein bL9 family.

Its function is as follows. Binds to the 23S rRNA. The polypeptide is Large ribosomal subunit protein bL9 (Yersinia enterocolitica serotype O:8 / biotype 1B (strain NCTC 13174 / 8081)).